A 304-amino-acid polypeptide reads, in one-letter code: Type II restriction enzyme LlaDCHI (304 aa).

It belongs to the DpnII type II restriction endonuclease family.

It carries out the reaction Endonucleolytic cleavage of DNA to give specific double-stranded fragments with terminal 5'-phosphates.. Its function is as follows. A P subtype restriction enzyme that recognizes the double-stranded unmethylated sequence 5'-GATC-3' and cleaves before G-1. In Lactococcus lactis subsp. cremoris (Streptococcus cremoris), this protein is Type II restriction enzyme LlaDCHI (llaDCHIR).